We begin with the raw amino-acid sequence, 202 residues long: KDEYITILQVSVPAPNLSPNLTCTITNTSKKKSKTFKLPETRNSQSSKKANPTPQAKNHYIEATKPTATKNIVGAMAPSNLNVNILTTFTHHQMSSWLMCEVSGFYPEDIHLWWLSAQTKMDPINFVTAQPVRQSGDKFQIWSVLRLPVALSPSLDTYTCVVEHEASQTKLNASKSLEISGCYHLLPESDGPPRRPDGPAFP.

Positions 32–58 (KSKTFKLPETRNSQSSKKANPTPQAKN) are disordered. Residues 41-56 (TRNSQSSKKANPTPQA) are compositionally biased toward polar residues. Residues 66–178 (PTATKNIVGA…TKLNASKSLE (113 aa)) form the Ig-like domain.

In Rattus norvegicus (Rat), this protein is Ig delta chain C region.